Here is a 465-residue protein sequence, read N- to C-terminus: ATP synthase subunit beta (465 aa).

ATP is bound at residue 155–162; sequence GGAGVGKT.

It belongs to the ATPase alpha/beta chains family. In terms of assembly, F-type ATPases have 2 components, CF(1) - the catalytic core - and CF(0) - the membrane proton channel. CF(1) has five subunits: alpha(3), beta(3), gamma(1), delta(1), epsilon(1). CF(0) has three main subunits: a(1), b(2) and c(9-12). The alpha and beta chains form an alternating ring which encloses part of the gamma chain. CF(1) is attached to CF(0) by a central stalk formed by the gamma and epsilon chains, while a peripheral stalk is formed by the delta and b chains.

Its subcellular location is the cell membrane. It carries out the reaction ATP + H2O + 4 H(+)(in) = ADP + phosphate + 5 H(+)(out). Functionally, produces ATP from ADP in the presence of a proton gradient across the membrane. The catalytic sites are hosted primarily by the beta subunits. The sequence is that of ATP synthase subunit beta from Buchnera aphidicola subsp. Baizongia pistaciae (strain Bp).